Reading from the N-terminus, the 311-residue chain is MGQRPFSPNHRSGVLNATTAGAVQFNVLGPLELNLRGTKLPLGTPKQRAVLAMLLLSRNQVVAADALVQAIWEKSPPARARRTVHTYICNLRRTLSDAGVDSRNILVSEPPGYRLLIGDRQQCDLDRFVAAKESGLRASAKGYFSEAIRYLDSALQNWRGPVLGDLRSFMFVQMFSRALTGDELLVHTKLAEAAIACGRADVVIPKLERLVAMHPYRESLWKQLMLGYYVNEYQSAAIDAYHRLKSTLAEELGVEPAPTIRALYHKILRQLPMDDLVGRVTRGRVDLRGGNGAKVEELTESDKDLLPIGLA.

A DNA-binding region (ompR/PhoB-type) is located at residues leucine 15–isoleucine 117.

This sequence belongs to the AfsR/DnrI/RedD regulatory family.

In terms of biological role, acts as a positive transcriptional regulator of the molybdopterin biosynthesis moa1 locus, promoting the expression of the moaA1B1C1D1 genes. The chain is Transcriptional regulatory protein MoaR1 (moaR1) from Mycobacterium bovis (strain BCG / Pasteur 1173P2).